Reading from the N-terminus, the 2798-residue chain is Kinesin-like protein KIN-12F (2798 aa).

A disordered region spans residues 1-165 (MVRDLAAVRR…RPPMSSGQRG (165 aa)). 2 stretches are compositionally biased toward low complexity: residues 8 to 22 (VRRTPARASTSSSAS) and 31 to 58 (PVDASDAAVVEPEAAAARPPLLAIQPPQ). The region spanning 210 to 547 (NVQVVIRVRP…LKFAQRARLI (338 aa)) is the Kinesin motor domain. 291 to 298 (GQTGSGKT) contacts ATP. Residues 600-615 (DVDDGTESMNMDEEND) show a composition bias toward acidic residues. The disordered stretch occupies residues 600 to 621 (DVDDGTESMNMDEENDNDAHDR). Coiled-coil stretches lie at residues 792 to 835 (ELKR…HSSN), 890 to 987 (LAEE…HRRQ), 1014 to 1108 (LKRM…VMKE), 1281 to 1322 (QRAM…LKNE), and 2130 to 2333 (ELVD…VRQQ). The tract at residues 2338–2359 (PSSGQATSSLEGGMGDFTDSSR) is disordered. 2 coiled-coil regions span residues 2361–2427 (SREI…VKSD) and 2545–2758 (ESKE…LKLK). The disordered stretch occupies residues 2772-2798 (RSESSSLSSGRSRSPSVCRSPSISSFR). The span at 2774–2798 (ESSSLSSGRSRSPSVCRSPSISSFR) shows a compositional bias: low complexity.

This sequence belongs to the TRAFAC class myosin-kinesin ATPase superfamily. Kinesin family. KIN-12 subfamily.

The polypeptide is Kinesin-like protein KIN-12F (Oryza sativa subsp. japonica (Rice)).